A 187-amino-acid chain; its full sequence is NADH-dependent FMN reductase SfnF (187 aa).

Belongs to the SsuE family.

It carries out the reaction FMNH2 + NAD(+) = FMN + NADH + 2 H(+). Functionally, involved in the dimethyl sulfide degradation pathway. Catalyzes the NADH-dependent reduction of FMN. The chain is NADH-dependent FMN reductase SfnF from Pseudomonas fluorescens (strain Pf0-1).